The chain runs to 62 residues: Keratin-associated protein 8-1 (62 aa).

A 12 X 2 AA repeats of G-[YCGS] region spans residues 12–53 (GCYWGSYGYPLGYSVGCGYGSTYSPVGYGFGYGYNGSGAFGC).

The protein belongs to the KRTAP type 8 family. As to quaternary structure, interacts with wool keratins. Wool.

Its function is as follows. In the wool cortex, wool keratin intermediate filaments are embedded in an interfilamentous matrix, consisting of hair keratin-associated proteins (KRTAP), which are essential for the formation of a rigid and resistant wool shaft through their extensive disulfide bond cross-linking with abundant cysteine residues of wool keratins. The matrix proteins include the high-sulfur and high-glycine-tyrosine keratins. This Ovis aries (Sheep) protein is Keratin-associated protein 8-1 (KRTAP8-1).